A 332-amino-acid polypeptide reads, in one-letter code: L-lactate dehydrogenase A chain (332 aa).

Residues 29 to 57 (GAVGMACAISILMKDLADELALVDVIEDK) and Arg99 contribute to the NAD(+) site. Residues Arg106, Asn138, and Arg169 each contribute to the substrate site. An NAD(+)-binding site is contributed by Asn138. His193 serves as the catalytic Proton acceptor. Thr248 contacts substrate.

It belongs to the LDH/MDH superfamily. LDH family. Homotetramer.

Its subcellular location is the cytoplasm. The enzyme catalyses (S)-lactate + NAD(+) = pyruvate + NADH + H(+). Its pathway is fermentation; pyruvate fermentation to lactate; (S)-lactate from pyruvate: step 1/1. Interconverts simultaneously and stereospecifically pyruvate and lactate with concomitant interconversion of NADH and NAD(+). This chain is L-lactate dehydrogenase A chain (LDHA), found in Pelodiscus sinensis japonicus (Chinese soft-shelled turtle).